A 255-amino-acid polypeptide reads, in one-letter code: tRNA (guanine-N(1)-)-methyltransferase (255 aa).

Residues Gly-113 and 133 to 138 contribute to the S-adenosyl-L-methionine site; that span reads IGDYVL.

The protein belongs to the RNA methyltransferase TrmD family. In terms of assembly, homodimer.

It is found in the cytoplasm. It carries out the reaction guanosine(37) in tRNA + S-adenosyl-L-methionine = N(1)-methylguanosine(37) in tRNA + S-adenosyl-L-homocysteine + H(+). Its function is as follows. Specifically methylates guanosine-37 in various tRNAs. In Escherichia fergusonii (strain ATCC 35469 / DSM 13698 / CCUG 18766 / IAM 14443 / JCM 21226 / LMG 7866 / NBRC 102419 / NCTC 12128 / CDC 0568-73), this protein is tRNA (guanine-N(1)-)-methyltransferase.